A 770-amino-acid chain; its full sequence is Pheromone-regulated membrane protein 10 (770 aa).

2 disordered regions span residues 1 to 125 (MDGR…DGDD) and 139 to 169 (NQGG…RNEE). Composition is skewed to polar residues over residues 49–63 (SGKS…NNDN) and 78–93 (DLSS…SKGT). A compositionally biased stretch (basic and acidic residues) spans 155–169 (ENGKDDIEKNNRNEE). Transmembrane regions (helical) follow at residues 453–473 (WMCV…AFGG), 475–495 (WVNL…QFIL), 505–525 (VFEI…GSIP), 529–549 (ICFG…YIIL), 568–588 (FYAI…SALF), 604–624 (LISP…ISLL), 629–649 (ISQL…TYWA), 659–679 (FTAA…SRIW), 681–701 (GLAV…GIAS), and 740–760 (IQVC…VYPF).

This sequence belongs to the ThrE exporter (TC 2.A.79) family.

It localises to the membrane. In Saccharomyces cerevisiae (strain YJM789) (Baker's yeast), this protein is Pheromone-regulated membrane protein 10 (PRM10).